A 340-amino-acid chain; its full sequence is Putative phosphatidylcholine:ceramide cholinephosphotransferase 3 (340 aa).

The segment at 1-25 is disordered; sequence MGSVSKTVISARGASPDDEQNGTKN. 4 consecutive transmembrane segments (helical) span residues 36–56, 81–101, 178–198, and 202–222; these read CIFL…VLAY, SSLG…LLVI, LLFS…AYYL, and IKPL…CMTI. His-183 is an active-site residue. Residues 223–340 lie on the Cytoplasmic side of the membrane; it reads SRTHYTIDVV…SSSSTYPLPC (118 aa). Residues His-226 and Asp-230 contribute to the active site. Residues 294–313 are disordered; sequence STPRGQERGGASAESSDSSV.

This sequence belongs to the sphingomyelin synthase family.

The protein resides in the membrane. The enzyme catalyses an N-acyl-sphingoid base + a 1,2-diacyl-sn-glycero-3-phosphocholine = an N-(acyl)-sphingosylphosphocholine + a 1,2-diacyl-sn-glycerol. The catalysed reaction is an N-acylsphing-4-enine + a 1,2-diacyl-sn-glycero-3-phosphocholine = a sphingomyelin + a 1,2-diacyl-sn-glycerol. It catalyses the reaction an N-acyl-15-methylhexadecasphing-4-enine + a 1,2-diacyl-sn-glycero-3-phosphocholine = an N-acyl-15-methylhexadecasphing-4-enine-1-phosphocholine + a 1,2-diacyl-sn-glycerol. It functions in the pathway lipid metabolism; sphingolipid metabolism. Bidirectional lipid cholinephosphotransferase capable of converting phosphatidylcholine (PC) and ceramide to sphingomyelin (SM) and diacylglycerol (DAG) and vice versa. Direction is dependent on the relative concentrations of DAG and ceramide as phosphocholine acceptors. Directly and specifically recognizes the choline head group on the substrate. Also requires two fatty chains on the choline-P donor molecule in order to be recognized efficiently as a substrate. Does not function strictly as a SM synthase. C.elegans contains specific sphingoid bases, which are unique or different in structure compared to the sphingoid bases found in other animals. Two examples of these distinctive compounds are: 15-methylhexadecasphinganine and 15-methylhexadecasphing-4-enine. The sequence is that of Putative phosphatidylcholine:ceramide cholinephosphotransferase 3 (sms-3) from Caenorhabditis elegans.